Here is a 279-residue protein sequence, read N- to C-terminus: uncharacterized protein (279 aa).

The HTH lysR-type domain occupies 14–71 (ITPNQIKLLIALHKTKSQNEAAKLLNIKPSSFNIQLKRLENKLGVKLYYSSPNGTVLT). Positions 31–50 (QNEAAKLLNIKPSSFNIQLK) form a DNA-binding region, H-T-H motif.

Belongs to the LysR transcriptional regulatory family.

This is an uncharacterized protein from Methanocaldococcus jannaschii (strain ATCC 43067 / DSM 2661 / JAL-1 / JCM 10045 / NBRC 100440) (Methanococcus jannaschii).